The primary structure comprises 736 residues: Protein DSF2 (736 aa).

Residues 1 to 10 (MNQNLKNTSW) are compositionally biased toward polar residues. Disordered regions lie at residues 1–46 (MNQN…DSQF), 178–208 (SGMK…SPNP), 229–410 (ISDN…SGEN), and 440–461 (FKTA…ARPN). Positions 14-24 (IGSDDQERKAN) are enriched in basic and acidic residues. Polar residues-rich tracts occupy residues 25-46 (SSEV…DSQF) and 197-208 (ENGNRSTNSPNP). A compositionally biased stretch (low complexity) spans 238 to 256 (NNANSKNNRTTSNNINTST). The segment covering 264-284 (KQSCPNEFTTTQKSNCLYRNG) has biased composition (polar residues). Composition is skewed to low complexity over residues 285 to 294 (SSTSTNTSFS), 303 to 318 (KTQS…FSKL), and 335 to 350 (SNSS…TMTN). Residues 374–385 (KLFKSPRTRAKN) show a composition bias toward basic residues. The span at 392 to 410 (EGSSPIRSATNSLDFSGEN) shows a compositional bias: polar residues.

In Saccharomyces cerevisiae (strain ATCC 204508 / S288c) (Baker's yeast), this protein is Protein DSF2 (DSF2).